The sequence spans 173 residues: RNA polymerase sigma factor TcsR (173 aa).

The segment at 122–169 (IKDLTQNEKNIIRKIYLDRLRESEISRELNISRQAVNKTHLRALEKLK) is sigma-70 factor domain-4. Positions 143 to 162 (ESEISRELNISRQAVNKTHL) form a DNA-binding region, H-T-H motif.

The protein belongs to the sigma-70 factor family.

In terms of biological role, sigma factors are initiation factors that promote the attachment of RNA polymerase to specific initiation sites and are then released. Transcriptional regulator specifically required to activate expression of the toxin gene locus, composed of tcsL, tcsH and tcdE/utxA. The protein is RNA polymerase sigma factor TcsR of Paraclostridium sordellii (Clostridium sordellii).